The primary structure comprises 24 residues: Citropin-3.1.2 (24 aa).

Expressed by the dorsal and submental skin glands.

It localises to the secreted. This chain is Citropin-3.1.2, found in Ranoidea citropa (Australian Blue Mountains tree frog).